We begin with the raw amino-acid sequence, 503 residues long: Glycerol kinase (503 aa).

Position 14 (threonine 14) interacts with ADP. ATP-binding residues include threonine 14, threonine 15, and serine 16. A sn-glycerol 3-phosphate-binding site is contributed by threonine 14. Arginine 18 contributes to the ADP binding site. Residues arginine 84, glutamate 85, tyrosine 136, and aspartate 246 each coordinate sn-glycerol 3-phosphate. Residues arginine 84, glutamate 85, tyrosine 136, aspartate 246, and glutamine 247 each contribute to the glycerol site. ADP contacts are provided by threonine 268 and glycine 311. ATP-binding residues include threonine 268, glycine 311, glutamine 315, and glycine 412. Residues glycine 412 and asparagine 416 each contribute to the ADP site. Over residues 468–481 the composition is skewed to basic and acidic residues; the sequence is ERTFSPDSDNEKRE. The segment at 468–489 is disordered; it reads ERTFSPDSDNEKRERRYKGWKK.

Belongs to the FGGY kinase family.

The catalysed reaction is glycerol + ATP = sn-glycerol 3-phosphate + ADP + H(+). The protein operates within polyol metabolism; glycerol degradation via glycerol kinase pathway; sn-glycerol 3-phosphate from glycerol: step 1/1. Its activity is regulated as follows. Inhibited by fructose 1,6-bisphosphate (FBP). Key enzyme in the regulation of glycerol uptake and metabolism. Catalyzes the phosphorylation of glycerol to yield sn-glycerol 3-phosphate. The chain is Glycerol kinase from Haemophilus influenzae (strain ATCC 51907 / DSM 11121 / KW20 / Rd).